A 580-amino-acid polypeptide reads, in one-letter code: Sensor histidine kinase YvrG (580 aa).

Residues 1–6 are Cytoplasmic-facing; that stretch reads MRLRWK. Residues 7 to 27 form a helical membrane-spanning segment; it reads FLFHFFGQMLIVILLLTVMLV. Residues 28 to 261 lie on the Extracellular side of the membrane; that stretch reads ASFFYLDARF…KSFLKVVLKA (234 aa). Residues 262–282 traverse the membrane as a helical segment; it reads MFLVMAVLFMYIIWMTVWYMF. The Cytoplasmic segment spans residues 283–580; the sequence is RFGLPIFHTI…TVITILFKKQ (298 aa). The 218-residue stretch at 363–580 folds into the Histidine kinase domain; that stretch reads GLSHDLKTPL…TVITILFKKQ (218 aa). A Phosphohistidine; by autocatalysis modification is found at His-366.

The protein localises to the cell membrane. The catalysed reaction is ATP + protein L-histidine = ADP + protein N-phospho-L-histidine.. In terms of biological role, member of the two-component regulatory system YvrG/YvrH that positively regulates 7 transcriptional units (wprA, wapA-yxxG, dltABCDE, sunA, sunT-bdbA-yolJ-bdbB, sigO-rsoA, and sigX-rsiX), and negatively regulates the lytABC operon. Probably activates YvrH by phosphorylation. The sequence is that of Sensor histidine kinase YvrG (yvrG) from Bacillus subtilis (strain 168).